Consider the following 228-residue polypeptide: MDKLLLWMSVFTSLLSEAFAQTDLNQKVFVFPRESETDYVKLIPWLEKPLQNFTLCFRAYSDLSRSQSLFSYSVNSRDNELLIYKDKVGQYSLYIGNSKVTVRGLEEFPSPIHFCTSWESSSGIAEFWVNGKPWVKKGLQKGYTVKSSPSIVLGQEQDTYGGGFDKTQSFVGEIADLYMWDSVLTPENIHSVDRGFPPNPNILDWRALNYEINGYVVIKPRMWDNKSS.

The N-terminal stretch at 1-20 (MDKLLLWMSVFTSLLSEAFA) is a signal peptide. The Pentraxin (PTX) domain occupies 25–224 (NQKVFVFPRE…YVVIKPRMWD (200 aa)). Asn52 carries an N-linked (GlcNAc...) asparagine glycan. Cysteines 56 and 115 form a disulfide. Positions 78, 79, 156, 157, 158, and 168 each coordinate Ca(2+).

This sequence belongs to the pentraxin family. Homopentamer. Pentraxin (or pentaxin) have a discoid arrangement of 5 non-covalently bound subunits. The cofactor is Ca(2+).

The protein localises to the secreted. This chain is Serum amyloid P-component (Apcs), found in Rattus norvegicus (Rat).